The sequence spans 1337 residues: Protein HEG homolog 1 (1337 aa).

The first 31 residues, 1 to 31, serve as a signal peptide directing secretion; that stretch reads MATPRAPRWPPPSLLLLLLLPLLLLPPAAPG. 2 stretches are compositionally biased toward low complexity: residues 28-40 and 54-66; these read AAPG…PSPA and PGAG…PGVA. Disordered stretches follow at residues 28–149, 175–211, 235–296, 313–675, 723–767, and 860–909; these read AAPG…SNMA, SSLL…GFLE, ASHP…QNPS, VPRT…PSPI, LIPS…TVSL, and EGNR…PQTT. Residues 32–1204 lie on the Extracellular side of the membrane; sequence ARGSLPSPAH…GLNCGNPYQL (1173 aa). The span at 118-131 shows a compositional bias: polar residues; that stretch reads TAQNARMSHSSSEG. A compositionally biased stretch (low complexity) spans 175–190; that stretch reads SSLLSLESLPESPSSS. 4 stretches are compositionally biased toward polar residues: residues 195–206, 247–258, 283–296, and 340–361; these read RITPSQTESGTS, VLSQKRNSSGQE, IKNG…QNPS, and GITS…NSGL. The segment covering 470-480 has biased composition (gly residues); sequence RGGGEDSGMGG. 2 stretches are compositionally biased toward low complexity: residues 486 to 502 and 556 to 575; these read SSSS…LDSS and SYSE…DSPS. 2 stretches are compositionally biased toward polar residues: residues 576-585 and 592-617; these read QAQPKQSSMS and AQSS…NMPN. The span at 637 to 675 shows a compositional bias: low complexity; the sequence is PSTQPSPSQPQPFSSALPSTRSPGSTSETTTSSPSPSPI. 2 stretches are compositionally biased toward polar residues: residues 725–742 and 751–763; these read PSNQ…QQEK and SLVS…TKAV. A compositionally biased stretch (low complexity) spans 868-884; sequence PTTQPIPLTTSTTSAGE. Positions 885–896 are enriched in basic and acidic residues; the sequence is RTTELGRAEESS. Positions 897 to 909 are enriched in polar residues; the sequence is PSHFLTPSSPQTT. Positions 941–979 constitute an EGF-like 1 domain; sequence PVNSCTVNPCLHDGKCIVDLTGRGYRCVCPPAWQGENCS. 6 disulfide bridges follow: C945–C956, C950–C967, C969–C978, C985–C996, C990–C1005, and C1007–C1018. The 39-residue stretch at 981–1019 folds into the EGF-like 2; calcium-binding domain; the sequence is DVNECLSSPCPPLATCNNTQGSFTCRCPVGYQLEKGICN. N1093 carries N-linked (GlcNAc...) asparagine glycosylation. The chain crosses the membrane as a helical span at residues 1205-1225; the sequence is ITVVIAAAGGGLLLILGVALI. The Cytoplasmic segment spans residues 1226–1337; it reads VTCCRKSKND…SDESRRRDYF (112 aa). Phosphoserine is present on S1315.

Interacts with CCM2 and KRIT1; KRIT1 markedly facilitates interaction with CCM2.

It is found in the cell membrane. The protein localises to the cell junction. Receptor component of the CCM signaling pathway which is a crucial regulator of heart and vessel formation and integrity. May be acting by stabilizing endothelial cell junctions. The protein is Protein HEG homolog 1 (Heg1) of Mus musculus (Mouse).